The chain runs to 290 residues: 33 kDa chaperonin (290 aa).

2 cysteine pairs are disulfide-bonded: Cys-235–Cys-237 and Cys-268–Cys-271.

It belongs to the HSP33 family. Post-translationally, under oxidizing conditions two disulfide bonds are formed involving the reactive cysteines. Under reducing conditions zinc is bound to the reactive cysteines and the protein is inactive.

The protein localises to the cytoplasm. Functionally, redox regulated molecular chaperone. Protects both thermally unfolding and oxidatively damaged proteins from irreversible aggregation. Plays an important role in the bacterial defense system toward oxidative stress. The polypeptide is 33 kDa chaperonin (Streptococcus pyogenes serotype M12 (strain MGAS2096)).